The primary structure comprises 216 residues: uncharacterized protein (216 aa).

Residues 54-215 (TATQPNEKWT…SPVNYRTQSL (162 aa)) enclose the Integrase catalytic domain.

Belongs to the transposase IS3/IS150/IS904 family.

This is an uncharacterized protein from Haemophilus influenzae (strain ATCC 51907 / DSM 11121 / KW20 / Rd).